A 359-amino-acid chain; its full sequence is Nicotinate N-methyltransferase 1 (359 aa).

Aspartate 226 contacts S-adenosyl-L-methionine.

The protein belongs to the class I-like SAM-binding methyltransferase superfamily. Cation-independent O-methyltransferase family. In terms of tissue distribution, highly expressed in anthers, pistils, developing siliques, and developing seeds.

It localises to the cytoplasm. The protein localises to the cytosol. It catalyses the reaction nicotinate + S-adenosyl-L-methionine = N-methylnicotinate + S-adenosyl-L-homocysteine. In terms of biological role, involved in nicotinate detoxification in planta. Catalyzes the conversion of nicotinate to N-methylnicotinate, which is a detoxified form of endogenous nicotinate in planta. The polypeptide is Nicotinate N-methyltransferase 1 (Arabidopsis thaliana (Mouse-ear cress)).